A 69-amino-acid polypeptide reads, in one-letter code: Large ribosomal subunit protein uL29 (69 aa).

The protein belongs to the universal ribosomal protein uL29 family.

This is Large ribosomal subunit protein uL29 from Rhodopseudomonas palustris (strain BisB5).